The chain runs to 708 residues: tRNA 5-methylaminomethyl-2-thiouridine biosynthesis bifunctional protein MnmC (708 aa).

The tRNA (mnm(5)s(2)U34)-methyltransferase stretch occupies residues 1-278 (MTAEPNKPCQ…ERQVLRQQDA (278 aa)). The tract at residues 301-708 (IGGGLASAHL…LRKLLKGKAL (408 aa)) is FAD-dependent cmnm(5)s(2)U34 oxidoreductase.

It in the N-terminal section; belongs to the methyltransferase superfamily. tRNA (mnm(5)s(2)U34)-methyltransferase family. In the C-terminal section; belongs to the DAO family. FAD is required as a cofactor.

The protein resides in the cytoplasm. The enzyme catalyses 5-aminomethyl-2-thiouridine(34) in tRNA + S-adenosyl-L-methionine = 5-methylaminomethyl-2-thiouridine(34) in tRNA + S-adenosyl-L-homocysteine + H(+). Its function is as follows. Catalyzes the last two steps in the biosynthesis of 5-methylaminomethyl-2-thiouridine (mnm(5)s(2)U) at the wobble position (U34) in tRNA. Catalyzes the FAD-dependent demodification of cmnm(5)s(2)U34 to nm(5)s(2)U34, followed by the transfer of a methyl group from S-adenosyl-L-methionine to nm(5)s(2)U34, to form mnm(5)s(2)U34. The protein is tRNA 5-methylaminomethyl-2-thiouridine biosynthesis bifunctional protein MnmC of Shewanella baltica (strain OS195).